Consider the following 446-residue polypeptide: Bifunctional protein GlmU (446 aa).

The segment at 1–226 is pyrophosphorylase; that stretch reads MLAIAILAAG…PFEIKGINDR (226 aa). Residues 7-10, Lys21, Gln73, and 78-79 each bind UDP-N-acetyl-alpha-D-glucosamine; these read LAAG and GT. Mg(2+) is bound at residue Asp103. Residues Gly140, Glu155, Asn170, and Asn224 each coordinate UDP-N-acetyl-alpha-D-glucosamine. A Mg(2+)-binding site is contributed by Asn224. The tract at residues 227 to 247 is linker; the sequence is VQLSECEHYIQEELKSLWMSK. Residues 248–446 form an N-acetyltransferase region; that stretch reads GVSFVDPISC…SKAIIRTKAD (199 aa). Residues Arg329 and Lys347 each contribute to the UDP-N-acetyl-alpha-D-glucosamine site. Residue His359 is the Proton acceptor of the active site. Residues Tyr362 and Asn373 each coordinate UDP-N-acetyl-alpha-D-glucosamine. Positions 376, 419, and 436 each coordinate acetyl-CoA.

It in the N-terminal section; belongs to the N-acetylglucosamine-1-phosphate uridyltransferase family. The protein in the C-terminal section; belongs to the transferase hexapeptide repeat family. As to quaternary structure, homotrimer. Mg(2+) is required as a cofactor.

It localises to the cytoplasm. It catalyses the reaction alpha-D-glucosamine 1-phosphate + acetyl-CoA = N-acetyl-alpha-D-glucosamine 1-phosphate + CoA + H(+). The catalysed reaction is N-acetyl-alpha-D-glucosamine 1-phosphate + UTP + H(+) = UDP-N-acetyl-alpha-D-glucosamine + diphosphate. The protein operates within nucleotide-sugar biosynthesis; UDP-N-acetyl-alpha-D-glucosamine biosynthesis; N-acetyl-alpha-D-glucosamine 1-phosphate from alpha-D-glucosamine 6-phosphate (route II): step 2/2. Its pathway is nucleotide-sugar biosynthesis; UDP-N-acetyl-alpha-D-glucosamine biosynthesis; UDP-N-acetyl-alpha-D-glucosamine from N-acetyl-alpha-D-glucosamine 1-phosphate: step 1/1. It participates in bacterial outer membrane biogenesis; LPS lipid A biosynthesis. In terms of biological role, catalyzes the last two sequential reactions in the de novo biosynthetic pathway for UDP-N-acetylglucosamine (UDP-GlcNAc). The C-terminal domain catalyzes the transfer of acetyl group from acetyl coenzyme A to glucosamine-1-phosphate (GlcN-1-P) to produce N-acetylglucosamine-1-phosphate (GlcNAc-1-P), which is converted into UDP-GlcNAc by the transfer of uridine 5-monophosphate (from uridine 5-triphosphate), a reaction catalyzed by the N-terminal domain. This Prochlorococcus marinus (strain NATL2A) protein is Bifunctional protein GlmU.